The following is a 252-amino-acid chain: Acyl-coenzyme A diphosphatase FITM2 (252 aa).

Residues 1–25 lie on the Cytoplasmic side of the membrane; sequence MAAAVAGSLVDKLVCLWRQPYTRIY. The chain crosses the membrane as a helical span at residues 26 to 46; the sequence is LPHLFFCISLVGSVLKNAELV. At 47–59 the chain is on the lumenal side; that stretch reads PESYFSSSRNVLN. Residues 60-80 form a helical membrane-spanning segment; the sequence is LYFVKVSWGWTIVLLLPFIAY. Topologically, residues 81–94 are cytoplasmic; that stretch reads SNFYIKSHMFALRR. Residues 95-115 form a helical membrane-spanning segment; it reads LTSLLVATLVWYICTETFFYI. The Lumenal segment spans residues 116-156; sequence EDITGSCYESNTMVVIRGEFDTKAACRKAGFFWDGFDISGH. Residue histidine 156 is part of the active site. Residues 157-177 form a helical membrane-spanning segment; it reads SFILSYSSLVIMEEMVPMLHI. The Cytoplasmic portion of the chain corresponds to 178–190; it reads QPAYRNPPLDCLY. Residues 191 to 211 form a helical membrane-spanning segment; that stretch reads LALNVIVAIWIWMFGCTSVYF. Histidine 212 is a catalytic residue. Residues 212-223 lie on the Lumenal side of the membrane; it reads HDIIDKILGTSC. A helical membrane pass occupies residues 224–244; that stretch reads GILGWYMTYKVWYVKLFSPGL. Topologically, residues 245 to 252 are cytoplasmic; sequence PPQPKQHT.

This sequence belongs to the FIT family. FIT2 subfamily. As to expression, widely expressed.

It localises to the endoplasmic reticulum membrane. The enzyme catalyses an acyl-CoA + H2O = an acyl-4'-phosphopantetheine + adenosine 3',5'-bisphosphate + 2 H(+). In terms of biological role, fatty acyl-coenzyme A (CoA) diphosphatase that hydrolyzes fatty acyl-CoA to yield acyl-4'-phosphopantetheine and adenosine 3',5'-bisphosphate. Preferentially hydrolyzes unsaturated long-chain acyl-CoA substrates in the endoplasmic reticulum (ER) lumen. This catalytic activity is required for maintaining ER structure and for lipid droplets (LDs) biogenesis, which are lipid storage organelles involved in maintaining lipid and energy homeostasis. Required for lipid droplet accumulation in liver and intestine during embryogenesis. May directly bind to diacylglycerol (DAGs) and triacylglycerol, which is also important for LD biogenesis. May support directional budding of nacent LDs from the ER into the cytosol by reducing DAG levels at sites of LD formation. May play a role in the regulation of cell morphology, ER morphology and cytoskeletal organization. The sequence is that of Acyl-coenzyme A diphosphatase FITM2 from Danio rerio (Zebrafish).